The chain runs to 423 residues: UDP-N-acetylglucosamine 1-carboxyvinyltransferase 2 (423 aa).

23–24 (KN) provides a ligand contact to phosphoenolpyruvate. Arg96 is a UDP-N-acetyl-alpha-D-glucosamine binding site. Catalysis depends on Cys120, which acts as the Proton donor. Position 120 is a 2-(S-cysteinyl)pyruvic acid O-phosphothioketal (Cys120). UDP-N-acetyl-alpha-D-glucosamine contacts are provided by residues 125–129 (RPIDL), Asp309, and Val331.

Belongs to the EPSP synthase family. MurA subfamily.

It localises to the cytoplasm. The enzyme catalyses phosphoenolpyruvate + UDP-N-acetyl-alpha-D-glucosamine = UDP-N-acetyl-3-O-(1-carboxyvinyl)-alpha-D-glucosamine + phosphate. The protein operates within cell wall biogenesis; peptidoglycan biosynthesis. In terms of biological role, cell wall formation. Adds enolpyruvyl to UDP-N-acetylglucosamine. The polypeptide is UDP-N-acetylglucosamine 1-carboxyvinyltransferase 2 (Streptococcus agalactiae serotype Ia (strain ATCC 27591 / A909 / CDC SS700)).